The sequence spans 857 residues: MVRSFPSDGWSALPTRFGFWPENPTTAGVVSSRVFSARLPEVCRQVHDKQPFGMFKGENGMNYTFSTFLIEAILIIFFIKIVYVLLRPLRQPRIVCEIIGGMMIGPSMLGRNRNFNYYLFPPIANYICANIGLMGFFYFFFLTAAKTDVAEIFKAPRKHKYIAAVSVLVPIACVGSTGAALKHKMDIRLQKPSSIGGVTFALGFTSFPVIYTVLRDMNLLNSEIGKFAMSVTLLGDMVGVYVLVLFEAMAQADGGGGAYSVIWFLISAAIMAACLLLVVKRSFEWIVAKTPEGGLVNQNYIVNILMGVLVSCFLTDMFGMAIAVGPIWLGLVVPHGPPLGSTLAIRSETFVNEFLMPFSFALVGQKTNVNLISKETWPKQISPLIYMSIVGFVTKFVSSTGAALFFKVPTRDSLTLGLMMNLRGQIDILLYLHWIDKQMVGLPGYSVMVLYAIVVTGVTAPLISFLYDPTRPYRSSKRRTIQHTPQNTETGLVLAVTDHDTFSGLITFLDFAYPTKTSPFSVFAIQLVELEGRAQPLFIAHDKKREEEYEEEEEPAERMGSRRVDQVQSAFKLYQEKRSECVTMHAYTAHASKHNMYQNICELALTKKTAFILLPYQKERLQDAALTELRDSGMLSVNADVLAHTPCSVCIYYEKGRLKNAMVRSSMDPQHTTNSSHMRQEMYRFVVLFLGGADNREALHLADRMTENPFINLTVIRFLAHNHEGEDEREKKLDDGVVTWFWVKNESNARVSYKEVVVKNGAETLAAIQAMNVNDYDLWITGRREGINPKILEGLSTWSEDHQLGVIGDTVAGSVFASEGSVLVVQQQVRNQMGGDGFLNGKFDYKKLVSPWSHSHN.

The next 11 membrane-spanning stretches (helical) occupy residues 65–85 (FSTF…VYVL), 93–110 (RIVC…SMLG), 122–142 (PIAN…FFFL), 161–181 (YIAA…GAAL), 194–214 (SIGG…YTVL), 227–247 (FAMS…VLFE), 259–279 (YSVI…LLVV), 313–333 (FLTD…GLVV), 385–405 (IYMS…AALF), 413–435 (SLTL…LHWI), and 447–467 (VMVL…SFLY). S855 carries the phosphoserine modification.

It belongs to the monovalent cation:proton antiporter 2 (CPA2) transporter (TC 2.A.37) family. CHX (TC 2.A.37.4) subfamily. In terms of tissue distribution, specifically expressed in pollen.

The protein resides in the membrane. Its function is as follows. May operate as a cation/H(+) antiporter. This is Cation/H(+) antiporter 25 (CHX25) from Arabidopsis thaliana (Mouse-ear cress).